A 398-amino-acid chain; its full sequence is Enoate reductase 1 (398 aa).

Residues Thr37 and His191 each contribute to the FMN site. Substrate-binding residues include His191 and Asn194. The active-site Proton donor is Tyr196. Residues Arg243 and Arg348 each coordinate FMN. A substrate-binding site is contributed by Tyr375.

It belongs to the NADH:flavin oxidoreductase/NADH oxidase family. In terms of assembly, homodimer or heterodimer. The cofactor is FMN.

The enzyme catalyses butanoate + NAD(+) = (2E)-2-butenoate + NADH + H(+). Functionally, enoate reductase with broad substrate specificity for different alpha,beta-unsaturated carbonyl compounds. Prefers NADPH over NADH as cofactor. This Kluyveromyces lactis (strain ATCC 8585 / CBS 2359 / DSM 70799 / NBRC 1267 / NRRL Y-1140 / WM37) (Yeast) protein is Enoate reductase 1 (KYE1).